The sequence spans 793 residues: Putative dipeptidyl aminopeptidase C2E11.08 (793 aa).

The Cytoplasmic segment spans residues 1–24; that stretch reads MNDFSFEDKGLISRSGFGSRHVRR. Residues 25-45 traverse the membrane as a helical; Signal-anchor for type II membrane protein segment; that stretch reads VVKALALIFSLLILYLTISNV. The Lumenal segment spans residues 46-793; that stretch reads SDSPPKRDSL…STGVRQHRWD (748 aa). N-linked (GlcNAc...) asparagine glycosylation is found at N101, N136, N246, N299, N303, N324, N336, N377, N384, N407, and N535. Active-site charge relay system residues include S647, D722, and H755. An N-linked (GlcNAc...) asparagine glycan is attached at N761.

This sequence belongs to the peptidase S9B family.

It is found in the vacuole membrane. This chain is Putative dipeptidyl aminopeptidase C2E11.08, found in Schizosaccharomyces pombe (strain 972 / ATCC 24843) (Fission yeast).